The sequence spans 122 residues: Large ribosomal subunit protein uL14 (122 aa).

This sequence belongs to the universal ribosomal protein uL14 family. In terms of assembly, part of the 50S ribosomal subunit. Forms a cluster with proteins L3 and L19. In the 70S ribosome, L14 and L19 interact and together make contacts with the 16S rRNA in bridges B5 and B8.

Functionally, binds to 23S rRNA. Forms part of two intersubunit bridges in the 70S ribosome. The polypeptide is Large ribosomal subunit protein uL14 (Acidothermus cellulolyticus (strain ATCC 43068 / DSM 8971 / 11B)).